Reading from the N-terminus, the 905-residue chain is Nitrate reductase [NADPH] (905 aa).

The segment at 1–42 is disordered; the sequence is METSTTTTLLQQERIPENSEPISTHIHTHSLPPTPPGTAKPS. A Mo-molybdopterin-binding site is contributed by Cys179. Positions 546 to 621 constitute a Cytochrome b5 heme-binding domain; sequence NRKITIEELK…LPTYHIGTLD (76 aa). Heme contacts are provided by His581 and His604. In terms of domain architecture, FAD-binding FR-type spans 648–759; sequence KTWSKAILDK…KGPTGKFVYH (112 aa). FAD is bound by residues 702–705, 719–723, 733–735, Ser783, and Thr786; these read RSYT, LIKIY, and VMT. 875-884 lines the NADP(+) pocket; that stretch reads LLLVCGPPPM.

This sequence belongs to the nitrate reductase family. As to quaternary structure, homodimer. It depends on FAD as a cofactor. Requires heme as cofactor. Mo-molybdopterin is required as a cofactor.

It carries out the reaction nitrite + NADP(+) + H2O = nitrate + NADPH + H(+). Functionally, nitrate reductase is a key enzyme involved in the first step of nitrate assimilation in plants, fungi and bacteria. In Fusarium oxysporum (Fusarium vascular wilt), this protein is Nitrate reductase [NADPH] (NIA).